Reading from the N-terminus, the 174-residue chain is MAKVQAKMQGKAVGPEDGLREKMIAINRVTKVVKGGRILGFAALTVVGDGDGSVGMGKGKSKEVPAAVQKAMEEARRNMTKITLKNGSIHHKVMGQHGAASVMMAPAPKGTGIIAGGPMRAVFEVIGITDIVAKSHGSTNPYNMVRATLDALSHDRTPSEVAAKRGKTIEELFV.

The 64-residue stretch at 19–82 (LREKMIAINR…EEARRNMTKI (64 aa)) folds into the S5 DRBM domain.

It belongs to the universal ribosomal protein uS5 family. In terms of assembly, part of the 30S ribosomal subunit. Contacts proteins S4 and S8.

Functionally, with S4 and S12 plays an important role in translational accuracy. Located at the back of the 30S subunit body where it stabilizes the conformation of the head with respect to the body. The polypeptide is Small ribosomal subunit protein uS5 (Albidiferax ferrireducens (strain ATCC BAA-621 / DSM 15236 / T118) (Rhodoferax ferrireducens)).